The primary structure comprises 475 residues: MVRMRRKRLWASCICFAAFFFLLVTLQVITELGNSENKAPAVSSLHSGPLKPDERHASQLKKNELYSNFRTEPDTDHYPILLWWSPLTGETGRSGQCGEDVCFFTINKTYQHSQMTRAFLFYGTDFSIDSLPLPRKDHHDWALFHEESPKNNYKLFHEPAITLFNHTATFSRHSHLPLTTQYLESIEVLRSLRHMIPVQMKNSLRKRLAPLVYVQSDCNAPSDRDSYVRELMCHIEVDSYGECLHNRDLPQHLRNPSAMDDGNFYKILAQYKFILAFENAICEDYITEKLWRPLMLGVVPVYFGSPSIIDWLPSNKSAILVSSFSHPRELARYIKTLDQNDQEYEAYLEWKLKGDISNPRLLTAMKERKWGVQDVTQDNYIDTFECMVCNRVWENIRREEKGWLPQRWSAQVNHLNCPKPEAFWFSSSNPSQSSLQEMWIASFEQSKKEAWALRQLVERNRNFTTQEFWMLVFKQ.

Residues methionine 1 to arginine 8 lie on the Cytoplasmic side of the membrane. Residues leucine 9–isoleucine 29 form a helical; Signal-anchor for type II membrane protein membrane-spanning segment. The Lumenal segment spans residues threonine 30 to glutamine 475. 3 N-linked (GlcNAc...) asparagine glycosylation sites follow: asparagine 107, asparagine 165, and asparagine 315. A disulfide bond links cysteine 386 and cysteine 389. Asparagine 462 carries an N-linked (GlcNAc...) asparagine glycan.

Belongs to the glycosyltransferase 10 family.

The protein resides in the endoplasmic reticulum membrane. It catalyses the reaction L-threonyl-[protein] + GDP-beta-L-fucose = 3-O-(alpha-L-fucosyl)-L-threonyl-[protein] + GDP + H(+). It carries out the reaction L-seryl-[protein] + GDP-beta-L-fucose = 3-O-(alpha-L-fucosyl)-L-seryl-[protein] + GDP + H(+). It participates in protein modification; protein glycosylation. Protein O-fucosyltransferase that specifically catalyzes O-fucosylation of serine or threonine residues in EMI domains of target proteins. Attaches fucose through an O-glycosidic linkage. O-fucosylation of EMI domain-containing proteins may be required for facilitating protein folding and secretion. The sequence is that of GDP-fucose protein O-fucosyltransferase 3 (FUT10) from Gallus gallus (Chicken).